The sequence spans 207 residues: Vascular endothelial growth factor B (207 aa).

The N-terminal stretch at 1-21 is a signal peptide; it reads MSPLLRRLLLAALLQLAPAQA. Intrachain disulfides connect cysteine 47-cysteine 89, cysteine 78-cysteine 122, and cysteine 82-cysteine 124. Residues 122–139 are compositionally biased toward basic and acidic residues; it reads CECRPKKKDSAVKPDRAA. Residues 122-207 form a disordered region; sequence CECRPKKKDS…AASSVAKGGA (86 aa). Positions 174–207 are enriched in low complexity; it reads PSAHAAPSTTSALTPGPAAAAADAAASSVAKGGA.

The protein belongs to the PDGF/VEGF growth factor family. In terms of assembly, homodimer; disulfide-linked. Can also form heterodimer with VEGF. In terms of processing, VEGF-B186 is O-glycosylated. Expressed in all tissues except liver. Highest levels found in heart, skeletal muscle and pancreas.

Its subcellular location is the secreted. Its function is as follows. Growth factor for endothelial cells. VEGF-B167 binds heparin and neuropilin-1 whereas the binding to neuropilin-1 of VEGF-B186 is regulated by proteolysis. This chain is Vascular endothelial growth factor B (VEGFB), found in Homo sapiens (Human).